The primary structure comprises 435 residues: uncharacterized protein (435 aa).

12 helical membrane passes run 26–46 (LLSGIIILNYFDRVAISVAAP), 61–81 (IVFSIYTYSYTLMQLPVGSLL), 96–116 (IWSFLTILLAFLQGKLLLYLF), 119–139 (LIGLTSASAFPAASKATALWF), 150–170 (LFDSAAKFSNVIGAPLVAFLV), 177–197 (VAFLTIGCINVLFTIFFWQYY), 242–262 (VWGLMIGFTGYGYTFNLLLTW), 281–301 (FTAVPWLISTISGIAVGGWLV), 325–345 (FGFFFLGSILTNNITVAIICI), 347–367 (IGLAGISATAPVGWSISAELA), 385–405 (LFGGIIAASLTGYLFDVTGSF), and 407–427 (LSFLVAGFVLLLGLVFYVFVL).

This sequence belongs to the major facilitator superfamily. Phthalate permease family.

It is found in the cell membrane. This is an uncharacterized protein from Bacillus subtilis (strain 168).